Consider the following 1183-residue polypeptide: PAN2-PAN3 deadenylation complex catalytic subunit PAN2 (1183 aa).

Positions 1-24 are disordered; sequence MDGWTEISRIAATTQPPKGPSPHI. WD repeat units lie at residues 159–207, 269–309, and 327–366; these read DLNK…SIKS, PFPA…NVFL, and SKAP…STIT. Positions 369–520 are linker; it reads FVNFPASIEQ…FQYKVPLSRK (152 aa). The 399-residue stretch at 521–919 folds into the USP domain; sequence KIPNCYSRLQ…KPVILVYHDS (399 aa). The 175-residue stretch at 977 to 1151 folds into the Exonuclease domain; sequence IAIDAEFVNL…EDAYTALLLY (175 aa). Residues Asp980, Glu982, Asp1090, and Asp1143 each contribute to the a divalent metal cation site.

Belongs to the peptidase C19 family. PAN2 subfamily. Forms a heterotrimer with an asymmetric homodimer of the regulatory subunit PAN3 to form the poly(A)-nuclease (PAN) deadenylation complex. Requires a divalent metal cation as cofactor.

The protein resides in the cytoplasm. The catalysed reaction is Exonucleolytic cleavage of poly(A) to 5'-AMP.. Positively regulated by the regulatory subunit PAN3. In terms of biological role, catalytic subunit of the poly(A)-nuclease (PAN) deadenylation complex, one of two cytoplasmic mRNA deadenylases involved in mRNA turnover. PAN specifically shortens poly(A) tails of RNA and the activity is stimulated by poly(A)-binding protein PAB1. PAN deadenylation is followed by rapid degradation of the shortened mRNA tails by the CCR4-NOT complex. Deadenylated mRNAs are then degraded by two alternative mechanisms, namely exosome-mediated 3'-5' exonucleolytic degradation, or deadenylation-dependent mRNA decaping and subsequent 5'-3' exonucleolytic degradation by XRN1. May also be involved in post-transcriptional maturation of mRNA poly(A) tails. This is PAN2-PAN3 deadenylation complex catalytic subunit PAN2 from Scheffersomyces stipitis (strain ATCC 58785 / CBS 6054 / NBRC 10063 / NRRL Y-11545) (Yeast).